The following is a 210-amino-acid chain: 3-hexulose-6-phosphate synthase (210 aa).

Belongs to the HPS/KGPDC family. HPS subfamily.

The enzyme catalyses D-ribulose 5-phosphate + formaldehyde = D-arabino-hex-3-ulose 6-phosphate. The protein operates within one-carbon metabolism; formaldehyde assimilation via RuMP pathway; D-fructose 6-phosphate from D-ribulose 5-phosphate and formaldehyde: step 1/2. Functionally, catalyzes the condensation of ribulose 5-phosphate with formaldehyde to form 3-hexulose 6-phosphate. The sequence is that of 3-hexulose-6-phosphate synthase from Staphylococcus haemolyticus (strain JCSC1435).